Consider the following 345-residue polypeptide: Selenide, water dikinase (345 aa).

Cysteine 16 is a catalytic residue. Residues lysine 19 and 45-47 (TSE) contribute to the ATP site. Aspartate 48 contacts Mg(2+). ATP-binding positions include aspartate 65, aspartate 88, and 136–138 (GHT). Aspartate 88 contacts Mg(2+). Aspartate 224 serves as a coordination point for Mg(2+).

It belongs to the selenophosphate synthase 1 family. Class I subfamily. In terms of assembly, homodimer. Requires Mg(2+) as cofactor.

It catalyses the reaction hydrogenselenide + ATP + H2O = selenophosphate + AMP + phosphate + 2 H(+). Functionally, synthesizes selenophosphate from selenide and ATP. The sequence is that of Selenide, water dikinase from Aliarcobacter butzleri (strain RM4018) (Arcobacter butzleri).